The primary structure comprises 497 residues: Probable cytosol aminopeptidase (497 aa).

Mn(2+) contacts are provided by K267 and D272. Residue K279 is part of the active site. Mn(2+)-binding residues include D290, D349, and E351. Residue R353 is part of the active site.

It belongs to the peptidase M17 family. Mn(2+) is required as a cofactor.

It is found in the cytoplasm. The catalysed reaction is Release of an N-terminal amino acid, Xaa-|-Yaa-, in which Xaa is preferably Leu, but may be other amino acids including Pro although not Arg or Lys, and Yaa may be Pro. Amino acid amides and methyl esters are also readily hydrolyzed, but rates on arylamides are exceedingly low.. The enzyme catalyses Release of an N-terminal amino acid, preferentially leucine, but not glutamic or aspartic acids.. In terms of biological role, presumably involved in the processing and regular turnover of intracellular proteins. Catalyzes the removal of unsubstituted N-terminal amino acids from various peptides. The polypeptide is Probable cytosol aminopeptidase (Pseudomonas putida (strain W619)).